The following is a 461-amino-acid chain: Secreted 45 kDa protein (461 aa).

An N-terminal signal peptide occupies residues 1-27 (MKKKIISAILMSTVILSAAAPLSGVYA). A compositionally biased stretch (low complexity) spans 264 to 329 (SSASASSSQA…GNTNSGTSTG (66 aa)). The interval 264–343 (SSASASSSQA…TTTGGSGINS (80 aa)) is disordered. The segment covering 330–340 (NTGGTTTGGSG) has biased composition (gly residues). The Peptidase C51 domain occupies 330–459 (NTGGTTTGGS…VSASGVTFLM (130 aa)).

The protein is Secreted 45 kDa protein (usp45) of Lactococcus lactis subsp. cremoris (strain MG1363).